The chain runs to 137 residues: Transcription antitermination protein NusB (137 aa).

It belongs to the NusB family.

Functionally, involved in transcription antitermination. Required for transcription of ribosomal RNA (rRNA) genes. Binds specifically to the boxA antiterminator sequence of the ribosomal RNA (rrn) operons. The protein is Transcription antitermination protein NusB of Aeromonas hydrophila subsp. hydrophila (strain ATCC 7966 / DSM 30187 / BCRC 13018 / CCUG 14551 / JCM 1027 / KCTC 2358 / NCIMB 9240 / NCTC 8049).